A 427-amino-acid chain; its full sequence is Acyl-lipid 8-desaturase (427 aa).

A disordered region spans residues 1–24 (MGRGGDSSGQAHPAAELAVPSDRA). The Cytochrome b5 heme-binding domain maps to 36-84 (IVLYGKRVDVTKFQRTHPGGSKVFRIFQDRDATEQFESYHSKRAIKMME). Heme is bound by residues His52 and His75. The Histidine box-1 motif lies at 178 to 182 (HSVFK). Residues 189 to 209 (VGWNNAAGYFLGFVQGYAVEW) traverse the membrane as a helical segment. The short motif at 213–218 (RHNTHH) is the Histidine box-2 element. 2 consecutive transmembrane segments (helical) span residues 261–281 (VPVM…YVAM) and 286–306 (MLPQ…VFAG). The Histidine box-3 motif lies at 373 to 377 (QTEHH).

This sequence belongs to the fatty acid desaturase type 1 family. It depends on Fe(2+) as a cofactor.

Its subcellular location is the membrane. Functionally, fatty acid desaturase that introduces a cis double bond at the 8-position in 20-carbon polyunsaturated fatty acids incorporated in a glycerolipid that contain a Delta(8) double bond to yield (20:4(8,11,14,17)). The protein is Acyl-lipid 8-desaturase of Rebecca salina (Marine microalga).